We begin with the raw amino-acid sequence, 102 residues long: MSTTSSKVAIKPLEDRIVVQPLDAEQTTASGLVIPDTAKEKPQEGVVLAVGPGRFENGERLPLDVKTGDVVLYSKYGGTEVKYNGEEYLVLSARDVLAIVEK.

The protein belongs to the GroES chaperonin family. Heptamer of 7 subunits arranged in a ring. Interacts with the chaperonin GroEL.

Its subcellular location is the cytoplasm. Functionally, together with the chaperonin GroEL, plays an essential role in assisting protein folding. The GroEL-GroES system forms a nano-cage that allows encapsulation of the non-native substrate proteins and provides a physical environment optimized to promote and accelerate protein folding. GroES binds to the apical surface of the GroEL ring, thereby capping the opening of the GroEL channel. This Streptomyces griseus subsp. griseus (strain JCM 4626 / CBS 651.72 / NBRC 13350 / KCC S-0626 / ISP 5235) protein is Co-chaperonin GroES.